Here is a 291-residue protein sequence, read N- to C-terminus: Ribosomal large subunit pseudouridine synthase B (291 aa).

An S4 RNA-binding domain is found at 3–75 (EKLQKVLARA…ICRVLAYYKP (73 aa)). Aspartate 110 acts as the Nucleophile in catalysis. Positions 256-291 (VEKDRRRMKANQIRRAVKRHSQVSGGRRSGGRNNNG) are disordered.

This sequence belongs to the pseudouridine synthase RsuA family.

The catalysed reaction is uridine(2605) in 23S rRNA = pseudouridine(2605) in 23S rRNA. Functionally, responsible for synthesis of pseudouridine from uracil-2605 in 23S ribosomal RNA. The sequence is that of Ribosomal large subunit pseudouridine synthase B (rluB) from Escherichia coli (strain K12).